Reading from the N-terminus, the 524-residue chain is General transcription factor IIF subunit 1 (524 aa).

Disordered stretches follow at residues 56-76 (MYQEEEMPESGAGSEYNRKQR) and 181-462 (RLKD…IQLT). Positions 242 to 257 (KPQKKVPAKGGKKKKR) are enriched in basic residues. The span at 262 to 289 (EALEDSDDGDFEGQEVDYMSDESSSDEE) shows a compositional bias: acidic residues. The span at 290–307 (LPGKIKPAKEEEGPKGLD) shows a compositional bias: basic and acidic residues. Acidic residues-rich tracts occupy residues 308 to 327 (EQSESSEESEEEKAEEEEGE) and 347 to 358 (SDESETSEDSDI). Residues 368-378 (QKKKTPPKKDK) are compositionally biased toward basic residues. The span at 381–397 (GSNSSSRGNSRPGTPSP) shows a compositional bias: low complexity. Positions 436–459 (PQNTSGKSTPQPQSGKSTPSSGDI) are enriched in polar residues.

This sequence belongs to the TFIIF alpha subunit family. As to quaternary structure, heterodimer of an alpha and a beta subunit. Phosphorylated on Ser and other residues by TAF1 and casein kinase II-like kinases.

The protein localises to the nucleus. TFIIF is a general transcription initiation factor that binds to RNA polymerase II and helps to recruit it to the initiation complex in collaboration with TFIIB. It promotes transcription elongation. The sequence is that of General transcription factor IIF subunit 1 (gtf2f1) from Xenopus laevis (African clawed frog).